We begin with the raw amino-acid sequence, 186 residues long: Dihydrofolate reductase (186 aa).

The 181-residue stretch at 3–183 (KFSLIVAVCA…IQYQYRIYEK (181 aa)) folds into the DHFR domain. Residues Ala-9 and 15–21 (GIGIKGD) contribute to the NADP(+) site. 29–34 (ELKYFS) is a binding site for substrate. Position 53 to 55 (53 to 55 (RKT)) interacts with NADP(+). Arg-69 provides a ligand contact to substrate. NADP(+)-binding positions include 75–77 (TRD) and 116–123 (GGNAVYKE).

This sequence belongs to the dihydrofolate reductase family.

The catalysed reaction is (6S)-5,6,7,8-tetrahydrofolate + NADP(+) = 7,8-dihydrofolate + NADPH + H(+). It functions in the pathway cofactor biosynthesis; tetrahydrofolate biosynthesis; 5,6,7,8-tetrahydrofolate from 7,8-dihydrofolate: step 1/1. Key enzyme in folate metabolism. Catalyzes an essential reaction for de novo glycine and purine synthesis, and for DNA precursor synthesis. The sequence is that of Dihydrofolate reductase (DHFR) from Aedes albopictus (Asian tiger mosquito).